We begin with the raw amino-acid sequence, 65 residues long: Disintegrin CC8B (65 aa).

Positions 1–65 (NSAHPCCDPV…DCPRNPWHKS (65 aa)) constitute a Disintegrin domain. 4 cysteine pairs are disulfide-bonded: Cys-6/Cys-29, Cys-20/Cys-26, Cys-25/Cys-50, and Cys-38/Cys-57. The Cell attachment site; atypical (WGD) motif lies at 42-44 (WGD).

The protein belongs to the disintegrin family. Dimeric disintegrin subfamily. As to quaternary structure, heterodimer with CC8A; disulfide-linked. Expressed by the venom gland.

The protein localises to the secreted. Functionally, inhibits integrins alpha-IIb/beta-3 (ITGA2B/ITGB3), alpha-V/beta-3 (ITGAV/ITGB3), and alpha-5/beta-1 (ITGA5/ITGB1). This chain is Disintegrin CC8B, found in Cerastes cerastes (Horned desert viper).